The sequence spans 312 residues: MRVIYFGTPEFSRIILEKIYDHLNIIGIVTQPDKPKGRGKKILPSPVKQFAINKGITVYQPEKLKGNIEFFNIIKDLKPDALIVASYGKIIPEDILNIPPYGGINVHASILPKYRGAAPIERALMNCEKETGVSIMKMEKGLDTGPVYAIKKIPILPDDDKGTLSIKLANLGADLLLEVLPLIKEGKLIPVPQDESLASYAPKLTKEEEIINWNMDGEKICCQIRALSPEPGAMTFFRGKILKVFKANFEKRFFDEDVINGTIIEQDRKKGIGVKVENGILWLLELQPEGKKKMNFLEFMNGYRLNIGERFE.

109–112 (SILP) serves as a coordination point for (6S)-5,6,7,8-tetrahydrofolate.

Belongs to the Fmt family.

The catalysed reaction is L-methionyl-tRNA(fMet) + (6R)-10-formyltetrahydrofolate = N-formyl-L-methionyl-tRNA(fMet) + (6S)-5,6,7,8-tetrahydrofolate + H(+). Attaches a formyl group to the free amino group of methionyl-tRNA(fMet). The formyl group appears to play a dual role in the initiator identity of N-formylmethionyl-tRNA by promoting its recognition by IF2 and preventing the misappropriation of this tRNA by the elongation apparatus. In Dictyoglomus thermophilum (strain ATCC 35947 / DSM 3960 / H-6-12), this protein is Methionyl-tRNA formyltransferase.